We begin with the raw amino-acid sequence, 297 residues long: T-cell leukemia homeobox protein 1 (297 aa).

Residues 153–174 (DRFTGHPYQNRTPPKKKKPRTS) are disordered. Residues 168 to 227 (KKKPRTSFTRLQICELEKRFHRQKYLASAERAALAKALKMTDAQVKTWFQNRRTKWRRQT) constitute a DNA-binding region (homeobox).

It is found in the nucleus. In terms of biological role, seems to be involved in the development of cranial sensory innervation from peripheral ganglia. In Gallus gallus (Chicken), this protein is T-cell leukemia homeobox protein 1 (TLX1).